The sequence spans 530 residues: Carbohydrate sulfotransferase 2 (530 aa).

Topologically, residues 1-54 (MSRSPQRALPPGALPRLLQAAPAAAPRALLPQWPRRPGRRWPASPLGMKVFRRK) are cytoplasmic. The helical; Signal-anchor for type II membrane protein transmembrane segment at 55–75 (ALVLCAGYALLLVLTMLNLLD) threads the bilayer. Residues 76 to 530 (YKWHKEPLQQ…SKTLLRKPRL (455 aa)) lie on the Lumenal side of the membrane. The disordered stretch occupies residues 89 to 119 (DGPLGAAAGAAGGSWGRPGPPPAGPPRAHAR). 173–179 (WRSGSSF) contacts 3'-phosphoadenylyl sulfate. Residue N243 is glycosylated (N-linked (GlcNAc...) asparagine). 332–340 (RDPRAVASS) contacts 3'-phosphoadenylyl sulfate. N-linked (GlcNAc...) asparagine glycans are attached at residues N457 and N475.

It belongs to the sulfotransferase 1 family. Gal/GlcNAc/GalNAc subfamily. Homodimer; disulfide-linked. Homodimerization is not essential for enzyme activity. In terms of processing, glycosylation at Asn-475 is required for catalytic activity. Widely expressed. Highly expressed in bone marrow, peripheral blood leukocytes, spleen, brain, spinal cord, ovary and placenta. Expressed by high endothelial cells (HEVs) and leukocytes.

The protein resides in the golgi apparatus. It is found in the trans-Golgi network membrane. The catalysed reaction is 3-O-{N-acetyl-beta-D-glucosaminyl-(1-&gt;3)-beta-D-galactosyl-(1-&gt;3)-N-acetyl-alpha-D-galactosaminyl}-L-threonyl-[protein] + 3'-phosphoadenylyl sulfate = 3-O-{6-O-sulfo-N-acetyl-beta-D-glucosaminyl-(1-&gt;3)-beta-D-galactosyl-(1-&gt;3)-N-acetyl-alpha-D-galactosaminyl}-L-threonyl-[protein] + adenosine 3',5'-bisphosphate + H(+). It carries out the reaction 3-O-{N-acetyl-beta-D-glucosaminyl-(1-&gt;3)-beta-D-galactosyl-(1-&gt;3)-N-acetyl-alpha-D-galactosaminyl}-L-seryl-[protein] + 3'-phosphoadenylyl sulfate = 3-O-{6-O-sulfo-N-acetyl-beta-D-glucosaminyl-(1-&gt;3)-beta-D-galactosyl-(1-&gt;3)-N-acetyl-alpha-D-galactosaminyl}-L-seryl-[protein] + adenosine 3',5'-bisphosphate + H(+). The enzyme catalyses a 3-O-{beta-D-galactosyl-(1-&gt;3)-[N-acetyl-beta-D-glucosaminyl-(1-&gt;6)]-N-acetyl-alpha-D-galactosaminyl}-L-threonyl-[protein] + 3'-phosphoadenylyl sulfate = 3-O-{beta-D-galactosyl-(1-&gt;3)-[6-O-sulfo-N-acetyl-beta-D-glucosaminyl-(1-&gt;6)]-N-acetyl-alpha-D-galactosaminyl}-L-threonyl-[protein] + adenosine 3',5'-bisphosphate + H(+). It catalyses the reaction 3-O-{beta-D-galactosyl-(1-&gt;3)-[N-acetyl-beta-D-glucosaminyl-(1-&gt;6)]-N-acetyl-alpha-D-galactosaminyl}-L-seryl-[protein] + 3'-phosphoadenylyl sulfate = 3-O-{beta-D-galactosyl-(1-&gt;3)-[6-O-sulfo-N-acetyl-beta-D-glucosaminyl-(1-&gt;6)]-N-acetyl-alpha-D-galactosaminyl}-L-seryl-[protein] + adenosine 3',5'-bisphosphate + H(+). Its pathway is protein modification; carbohydrate sulfation. Functionally, sulfotransferase that utilizes 3'-phospho-5'-adenylyl sulfate (PAPS) as sulfonate donor to catalyze the transfer of sulfate to position 6 of non-reducing N-acetylglucosamine (GlcNAc) residues within keratan-like structures on N-linked glycans and within mucin-associated glycans that can ultimately serve as SELL ligands. SELL ligands are present in high endothelial cells (HEVs) and play a central role in lymphocyte homing at sites of inflammation. Participates in biosynthesis of the SELL ligand sialyl 6-sulfo Lewis X and in lymphocyte homing to Peyer patches. Has no activity toward O-linked sugars. Its substrate specificity may be influenced by its subcellular location. Sulfates GlcNAc residues at terminal, non-reducing ends of oligosaccharide chains. This Homo sapiens (Human) protein is Carbohydrate sulfotransferase 2 (CHST2).